The primary structure comprises 292 residues: GTP cyclohydrolase FolE2 (292 aa).

Belongs to the GTP cyclohydrolase IV family.

It catalyses the reaction GTP + H2O = 7,8-dihydroneopterin 3'-triphosphate + formate + H(+). It participates in cofactor biosynthesis; 7,8-dihydroneopterin triphosphate biosynthesis; 7,8-dihydroneopterin triphosphate from GTP: step 1/1. Converts GTP to 7,8-dihydroneopterin triphosphate. This is GTP cyclohydrolase FolE2 from Staphylococcus haemolyticus (strain JCSC1435).